We begin with the raw amino-acid sequence, 225 residues long: Small ribosomal subunit protein uS7 (225 aa).

Residue Ser-2 is modified to N-acetylserine. Position 27 is a phosphothreonine (Thr-27). Residues Lys-45 and Lys-203 each participate in a glycyl lysine isopeptide (Lys-Gly) (interchain with G-Cter in ubiquitin) cross-link.

The protein belongs to the universal ribosomal protein uS7 family. In terms of assembly, component of the small ribosomal subunit (SSU). Mature yeast ribosomes consist of a small (40S) and a large (60S) subunit. The 40S small subunit contains 1 molecule of ribosomal RNA (18S rRNA) and 33 different proteins (encoded by 57 genes). The large 60S subunit contains 3 rRNA molecules (25S, 5.8S and 5S rRNA) and 46 different proteins (encoded by 81 genes). N-terminally acetylated by acetyltransferase NatA.

Its subcellular location is the cytoplasm. Component of the ribosome, a large ribonucleoprotein complex responsible for the synthesis of proteins in the cell. The small ribosomal subunit (SSU) binds messenger RNAs (mRNAs) and translates the encoded message by selecting cognate aminoacyl-transfer RNA (tRNA) molecules. The large subunit (LSU) contains the ribosomal catalytic site termed the peptidyl transferase center (PTC), which catalyzes the formation of peptide bonds, thereby polymerizing the amino acids delivered by tRNAs into a polypeptide chain. The nascent polypeptides leave the ribosome through a tunnel in the LSU and interact with protein factors that function in enzymatic processing, targeting, and the membrane insertion of nascent chains at the exit of the ribosomal tunnel. In Saccharomyces cerevisiae (strain ATCC 204508 / S288c) (Baker's yeast), this protein is Small ribosomal subunit protein uS7.